We begin with the raw amino-acid sequence, 272 residues long: Shikimate dehydrogenase (NADP(+)) (272 aa).

Shikimate is bound by residues 14 to 16 (SKS) and threonine 61. The active-site Proton acceptor is the lysine 65. Position 77 (glutamate 77) interacts with NADP(+). Residues asparagine 86 and aspartate 102 each coordinate shikimate. Residues 126–130 (GAGGA), 149–154 (NRTVSR), and methionine 213 contribute to the NADP(+) site. Tyrosine 215 lines the shikimate pocket. Glycine 237 lines the NADP(+) pocket.

The protein belongs to the shikimate dehydrogenase family. Homodimer.

It carries out the reaction shikimate + NADP(+) = 3-dehydroshikimate + NADPH + H(+). It participates in metabolic intermediate biosynthesis; chorismate biosynthesis; chorismate from D-erythrose 4-phosphate and phosphoenolpyruvate: step 4/7. Its function is as follows. Involved in the biosynthesis of the chorismate, which leads to the biosynthesis of aromatic amino acids. Catalyzes the reversible NADPH linked reduction of 3-dehydroshikimate (DHSA) to yield shikimate (SA). The protein is Shikimate dehydrogenase (NADP(+)) of Escherichia coli (strain K12 / MC4100 / BW2952).